Reading from the N-terminus, the 1198-residue chain is MALVQAHRARRLHAEAPDSGDQPPRRRVRQQPTRAAPAPARARRRRAPAPSPGGSGAPPTSGGSPASPLLDASSKDTPAAHRPPRGTVVAPRGCGLLQAIDAATNQPLEIRYHLDLARALTRLCEVNLQELPPDLTPRELQTMDSSHLRDVVIKLRPPRADIWTLGSRGVVVRSTVTPLEQPDGQGQAAEVEDHQPNPPGEGLKFPLCFLVRGRQVNLVQDVQPVHRCQYCARFYKSQHECSARRRDFYFHHINSHSSNWWREIQFFPIGSHPRTERLFVTYDVETYTWMGAFGKQLVPFMLVMKFGGDEPLVTAARDLAANLGWDRWEQDPLTFYCITPEKMAIGRQFRTFRDHLQMLMARDLWSSFVASNPHLADWALSEHGLSSPEELTYEELKKLPSIKGIPRFLELYIVGHNINGFDEIVLAAQVINNRSEVPGPFRITRNFMPRAGKILFNDVTFALPNPRSKKRTDFLLWEQGGCDDTDFKYQYLKVMVRDTFALTHTSLRKAAQAYALPVEKGCCAYQAVNQFYMLGSYRSEADGFPIQEYWKDREEFVLNRELWKKKGQDKYDIIKETLDYCALDVQVTAELVNKLRDSYASFVRDAVGLTDASFNVFQRPTISSNSHAIFRQIVFRAEQPARSNLGPDLLAPSHELYDYVRASIRGGRCYPTYLGILREPLYVYDICGMYASALTHPMPWGPPLNPYERALAARAWQQALDLQGCKIDYFDARLLPGVFTVDADPPDETQLDPLPPFCSRKGGRLCWTNERLRGEVATSVDLVTLHNRGWRVHLVPDERTTVFPEWRCVAREYVQLNIAAKERADRDKNQTLRSIAKLLSNALYGSFATKLDNKKIVFSDQMDAATLKGITAGQVNIKSSSFLETDNLSAEVMPAFQREYSPQQLALADSDAEESEDERAPTPFYSPPSGTPGHVAYTYKPITFLDAEEGDMCLHTLERVDPLVDNDRYPSHLASFVLAWTRAFVSEWSEFLYEEDRGTPLEDRPLKSVYGDTDSLFVTERGHRLMETRGKKRIKKHGGNLVFDPERPELTWLVECETVCGACGADAYSPESVFLAPKLYALKSLHCPSCGASSKGKLRAKGHAAEGLDYDTMVKCYLADAQGEDRQRFSTSRTSLKRTLASAQPGAHPFTVTQTTLTRTLRPWKDMTLARLDEHRLLPYSESRPNPRNEEICWIEMP.

3 disordered regions span residues 1-87 (MALV…PRGT), 179-199 (LEQPDGQGQAAEVEDHQPNPP), and 904-930 (QLALADSDAEESEDERAPTPFYSPPSG). Composition is skewed to low complexity over residues 30-40 (QQPTRAAPAPA) and 57-68 (APPTSGGSPASP).

This sequence belongs to the DNA polymerase type-B family. In terms of assembly, heterodimer with the terminal protein; this heterodimer binds to bp 9 to 18 of the genome. Forms a complex with viral pTP, DBP and hosts NFIA and POU2F1/OCT1 for initiation of replication.

The protein localises to the host nucleus. The catalysed reaction is DNA(n) + a 2'-deoxyribonucleoside 5'-triphosphate = DNA(n+1) + diphosphate. Its function is as follows. Eukaryotic-type DNA polymerase involved in viral genomic replication. DNA synthesis is protein primed, and acts in a strand displacement replication. Assembles in complex with viral pTP, DBP, host NFIA and host POU2F1/OCT1 on viral origin of replication. The polymerase covalently transfers dCMP onto pTP, thereby initiating complementary strand synthesis. This chain is DNA polymerase, found in Homo sapiens (Human).